The chain runs to 392 residues: Phosphopentomutase (392 aa).

Asp-13, Asp-286, His-291, Asp-327, His-328, and His-339 together coordinate Mn(2+).

The protein belongs to the phosphopentomutase family. The cofactor is Mn(2+).

The protein localises to the cytoplasm. It carries out the reaction 2-deoxy-alpha-D-ribose 1-phosphate = 2-deoxy-D-ribose 5-phosphate. The enzyme catalyses alpha-D-ribose 1-phosphate = D-ribose 5-phosphate. It participates in carbohydrate degradation; 2-deoxy-D-ribose 1-phosphate degradation; D-glyceraldehyde 3-phosphate and acetaldehyde from 2-deoxy-alpha-D-ribose 1-phosphate: step 1/2. Functionally, isomerase that catalyzes the conversion of deoxy-ribose 1-phosphate (dRib-1-P) and ribose 1-phosphate (Rib-1-P) to deoxy-ribose 5-phosphate (dRib-5-P) and ribose 5-phosphate (Rib-5-P), respectively. The polypeptide is Phosphopentomutase (Oceanobacillus iheyensis (strain DSM 14371 / CIP 107618 / JCM 11309 / KCTC 3954 / HTE831)).